Reading from the N-terminus, the 74-residue chain is uncharacterized protein (74 aa).

This is an uncharacterized protein from Saccharomyces cerevisiae (strain ATCC 204508 / S288c) (Baker's yeast).